Consider the following 559-residue polypeptide: NXPE family member 2 (559 aa).

Residues Ala17 to Leu37 form a helical membrane-spanning segment.

It belongs to the NXPE family.

The protein localises to the membrane. This is NXPE family member 2 (NXPE2) from Homo sapiens (Human).